The sequence spans 180 residues: Insulin-like growth factor 2 (180 aa).

Residues 1-24 (MGIPVGKSMLVLLISLAFALCCIA) form the signal peptide. A b region spans residues 25-52 (AYRPSETLCGGELVDTLQFVCSDRGFYF). Cystine bridges form between Cys33/Cys71, Cys45/Cys84, and Cys70/Cys75. Residues 53–64 (SRPSSRANRRSR) are c. The a stretch occupies residues 65–85 (GIVEECCFRSCDLALLETYCA). Positions 86 to 91 (TPAKSE) are d. A propeptide spans 92-180 (RDVSTSQAVL…ASSEMSSNHQ (89 aa)) (e peptide). The disordered stretch occupies residues 160–180 (VLPPKDPAHGGASSEMSSNHQ).

This sequence belongs to the insulin family. Interacts with MYORG; this interaction is required for IGF2 secretion. Interacts with integrins ITGAV:ITGB3 and ITGA6:ITGB4; integrin-binding is required for IGF2 signaling. Interacts with IGFBP2. Post-translationally, proteolytically processed by PCSK4, proIGF2 is cleaved at Arg-128 and Arg-92 to generate big-IGF2 and mature IGF2.

It localises to the secreted. In terms of biological role, the insulin-like growth factors possess growth-promoting activity. Major fetal growth hormone in mammals. Plays a key role in regulating fetoplacental development. IGF2 is influenced by placental lactogen. Also involved in tissue differentiation. In adults, involved in glucose metabolism in adipose tissue, skeletal muscle and liver. Acts as a ligand for integrin which is required for IGF2 signaling. Positively regulates myogenic transcription factor MYOD1 function by facilitating the recruitment of transcriptional coactivators, thereby controlling muscle terminal differentiation. Inhibits myoblast differentiation and modulates metabolism via increasing the mitochondrial respiration rate. Functionally, preptin undergoes glucose-mediated co-secretion with insulin, and acts as a physiological amplifier of glucose-mediated insulin secretion. Exhibits osteogenic properties by increasing osteoblast mitogenic activity through phosphoactivation of MAPK1 and MAPK3. The protein is Insulin-like growth factor 2 of Rattus norvegicus (Rat).